A 438-amino-acid chain; its full sequence is (3,5-dihydroxyphenyl)acetyl-CoA 1,2-dioxygenase (438 aa).

Residues Asp-183, Glu-189, 222 to 225, 233 to 238, Gly-296, 325 to 327, and Gln-416 each bind substrate; these read HPRY, AGINLK, and IPG.

The protein belongs to the enoyl-CoA hydratase/isomerase family. As to quaternary structure, homohexamer; dimer of trimers.

The enzyme catalyses (3,5-dihydroxyphenyl)acetyl-CoA + O2 = 2-(3,5-dihydroxyphenyl)-2-oxoacetate + CoA + H(+). With respect to regulation, inhibited by DPA-S-(N-acetylcysteamine). In terms of biological role, involved in the biosynthesis of the nonproteinogenic amino acid monomer (S)-3,5-dihydroxyphenylglycine (Dpg) responsible of the production of vancomycin and teicoplanin antibiotics. Catalyzes the unusual conversion 3,5-dihydroxyphenylacetyl-CoA (DPA-CoA) to 3,5-dihydroxyphenylglyoxylate. DpgC performed a net four-electron oxidation of the benzylic carbon of DPA-CoA and the hydrolysis of the thioester bond to generate free CoA. DpgC has the ability to process a diverse range of substituted phenylacetyl-CoA substrates. The sequence is that of (3,5-dihydroxyphenyl)acetyl-CoA 1,2-dioxygenase from Streptomyces toyocaensis.